We begin with the raw amino-acid sequence, 345 residues long: tRNA N6-adenosine threonylcarbamoyltransferase (345 aa).

Positions 111 and 115 each coordinate Fe cation. Substrate-binding positions include 134–138 (LVSGG), Asp-167, Gly-180, and Asn-276. Asp-304 contacts Fe cation.

This sequence belongs to the KAE1 / TsaD family. Requires Fe(2+) as cofactor.

The protein localises to the cytoplasm. It carries out the reaction L-threonylcarbamoyladenylate + adenosine(37) in tRNA = N(6)-L-threonylcarbamoyladenosine(37) in tRNA + AMP + H(+). Functionally, required for the formation of a threonylcarbamoyl group on adenosine at position 37 (t(6)A37) in tRNAs that read codons beginning with adenine. Is involved in the transfer of the threonylcarbamoyl moiety of threonylcarbamoyl-AMP (TC-AMP) to the N6 group of A37, together with TsaE and TsaB. TsaD likely plays a direct catalytic role in this reaction. This is tRNA N6-adenosine threonylcarbamoyltransferase from Alcanivorax borkumensis (strain ATCC 700651 / DSM 11573 / NCIMB 13689 / SK2).